Reading from the N-terminus, the 75-residue chain is UPF0512 protein C (75 aa).

It belongs to the UPF0512 family.

This Dictyostelium discoideum (Social amoeba) protein is UPF0512 protein C.